The primary structure comprises 45 residues: Iota-conotoxin-like R11.12 (45 aa).

Cystine bridges form between cysteine 5-cysteine 19, cysteine 12-cysteine 22, cysteine 18-cysteine 27, and cysteine 21-cysteine 36. At leucine 43 the chain carries D-leucine. Arginine 45 is a propeptide (removed by a carboxypeptidase).

It belongs to the conotoxin I1 superfamily. Expressed by the venom duct.

It localises to the secreted. In terms of biological role, iota-conotoxins bind to voltage-gated sodium channels (Nav) and act as agonists by shifting the voltage-dependence of activation to more hyperpolarized levels. Produces general excitatory symptoms. This Conus radiatus (Rayed cone) protein is Iota-conotoxin-like R11.12.